Here is a 129-residue protein sequence, read N- to C-terminus: Large ribosomal subunit protein uL22 (129 aa).

Belongs to the universal ribosomal protein uL22 family. Part of the 50S ribosomal subunit.

In terms of biological role, this protein binds specifically to 23S rRNA; its binding is stimulated by other ribosomal proteins, e.g. L4, L17, and L20. It is important during the early stages of 50S assembly. It makes multiple contacts with different domains of the 23S rRNA in the assembled 50S subunit and ribosome. Functionally, the globular domain of the protein is located near the polypeptide exit tunnel on the outside of the subunit, while an extended beta-hairpin is found that lines the wall of the exit tunnel in the center of the 70S ribosome. The protein is Large ribosomal subunit protein uL22 of Agrobacterium fabrum (strain C58 / ATCC 33970) (Agrobacterium tumefaciens (strain C58)).